A 440-amino-acid chain; its full sequence is Serine hydroxymethyltransferase (440 aa).

(6S)-5,6,7,8-tetrahydrofolate is bound by residues Leu-119 and 123–125; that span reads GHL. Lys-228 carries the N6-(pyridoxal phosphate)lysine modification. (6S)-5,6,7,8-tetrahydrofolate is bound at residue 370–372; the sequence is SPF.

Belongs to the SHMT family. As to quaternary structure, homodimer. It depends on pyridoxal 5'-phosphate as a cofactor.

It localises to the cytoplasm. The catalysed reaction is (6R)-5,10-methylene-5,6,7,8-tetrahydrofolate + glycine + H2O = (6S)-5,6,7,8-tetrahydrofolate + L-serine. It functions in the pathway one-carbon metabolism; tetrahydrofolate interconversion. It participates in amino-acid biosynthesis; glycine biosynthesis; glycine from L-serine: step 1/1. Functionally, catalyzes the reversible interconversion of serine and glycine with tetrahydrofolate (THF) serving as the one-carbon carrier. This reaction serves as the major source of one-carbon groups required for the biosynthesis of purines, thymidylate, methionine, and other important biomolecules. Also exhibits THF-independent aldolase activity toward beta-hydroxyamino acids, producing glycine and aldehydes, via a retro-aldol mechanism. The polypeptide is Serine hydroxymethyltransferase (Chlorobaculum parvum (strain DSM 263 / NCIMB 8327) (Chlorobium vibrioforme subsp. thiosulfatophilum)).